An 86-amino-acid polypeptide reads, in one-letter code: YSQVKKEKEQGCYEDFIECLKLYDKEENGTMMLAELQHALLALGESLDDEQVETLFADCMDPEDDEGFIPYSQFIQRLMSDPVVFD.

The EF-hand domain occupies 11–46; that stretch reads GCYEDFIECLKLYDKEENGTMMLAELQHALLALGES.

In terms of assembly, myosin is a hexamer of 2 heavy chains and 4 light chains.

This is Myosin light chain alkali (Mlc1) from Drosophila subobscura (Fruit fly).